A 444-amino-acid chain; its full sequence is Multidrug resistance protein MdtA (444 aa).

An N-terminal signal peptide occupies residues 1-20 (MKSQSKRTSRLFVFVGGVVA). The segment covering 37–52 (NNTSGAQQSARGQDTS) has biased composition (polar residues). 2 disordered regions span residues 37–60 (NNTS…RNTP) and 398–444 (TPRS…AEKS). Over residues 406–419 (ANPASAEKAAAEAE) the composition is skewed to low complexity. Residues 435 to 444 (ARSTTAAEKS) are compositionally biased toward polar residues.

It belongs to the membrane fusion protein (MFP) (TC 8.A.1) family. Part of a tripartite efflux system composed of MdtA, MdtB and MdtC.

The protein resides in the cell inner membrane. The chain is Multidrug resistance protein MdtA from Yersinia pseudotuberculosis serotype O:1b (strain IP 31758).